A 354-amino-acid polypeptide reads, in one-letter code: Uroporphyrinogen decarboxylase (354 aa).

Residues arginine 27–arginine 31, aspartate 77, tyrosine 154, serine 209, and histidine 327 each bind substrate.

This sequence belongs to the uroporphyrinogen decarboxylase family. Homodimer.

The protein resides in the cytoplasm. The enzyme catalyses uroporphyrinogen III + 4 H(+) = coproporphyrinogen III + 4 CO2. The protein operates within porphyrin-containing compound metabolism; protoporphyrin-IX biosynthesis; coproporphyrinogen-III from 5-aminolevulinate: step 4/4. Catalyzes the decarboxylation of four acetate groups of uroporphyrinogen-III to yield coproporphyrinogen-III. This chain is Uroporphyrinogen decarboxylase, found in Shewanella denitrificans (strain OS217 / ATCC BAA-1090 / DSM 15013).